The primary structure comprises 863 residues: Eukaryotic translation initiation factor 3 subunit C (863 aa).

The tract at residues Met-1–Asp-92 is disordered. The span at Ser-16 to Glu-53 shows a compositional bias: acidic residues. A compositionally biased stretch (basic and acidic residues) spans Gly-79 to Asp-92. The PCI domain occupies Phe-604–Glu-778. Residues Thr-808–Gly-863 form a disordered region. Gly residues predominate over residues Gln-822 to Ala-839. Low complexity predominate over residues Gly-840 to Thr-850.

It belongs to the eIF-3 subunit C family. In terms of assembly, component of the eukaryotic translation initiation factor 3 (eIF-3) complex.

Its subcellular location is the cytoplasm. Functionally, component of the eukaryotic translation initiation factor 3 (eIF-3) complex, which is involved in protein synthesis of a specialized repertoire of mRNAs and, together with other initiation factors, stimulates binding of mRNA and methionyl-tRNAi to the 40S ribosome. The eIF-3 complex specifically targets and initiates translation of a subset of mRNAs involved in cell proliferation. This is Eukaryotic translation initiation factor 3 subunit C from Chaetomium globosum (strain ATCC 6205 / CBS 148.51 / DSM 1962 / NBRC 6347 / NRRL 1970) (Soil fungus).